Reading from the N-terminus, the 146-residue chain is Hemoglobin subunit beta-1 (146 aa).

The Globin domain occupies 2–146 (HWTAEEKQLI…VSHSLARRYH (145 aa)). Heme b-binding residues include histidine 63 and histidine 92.

Belongs to the globin family. The major hemoglobin component (HbIII) is a tetramer of two alpha-2 chains and two beta-1 chains. As to expression, red blood cells.

Its function is as follows. Involved in oxygen transport from the lung to the various peripheral tissues. The protein is Hemoglobin subunit beta-1 (HBB1) of Varanus albigularis (White-throated monitor).